Here is an 83-residue protein sequence, read N- to C-terminus: MEEERIYTIPLRDVTNKSPTTKRAPRAIRAIRAFLMKHMKSDVVKLDNSINEKVWERSLNKIPAKVRVKAVKEGDVVKATLIE.

This sequence belongs to the eukaryotic ribosomal protein eL31 family.

The protein is Large ribosomal subunit protein eL31 of Methanococcus vannielii (strain ATCC 35089 / DSM 1224 / JCM 13029 / OCM 148 / SB).